Consider the following 316-residue polypeptide: Tetrahydromethanopterin S-methyltransferase subunit H (316 aa).

It belongs to the MtrH family. As to quaternary structure, the complex is composed of 8 subunits; MtrA, MtrB, MtrC, MtrD, MtrE, MtrF, MtrG and MtrH.

It carries out the reaction 5-methyl-5,6,7,8-tetrahydromethanopterin + coenzyme M + 2 Na(+)(in) = 5,6,7,8-tetrahydromethanopterin + methyl-coenzyme M + 2 Na(+)(out). The protein operates within one-carbon metabolism; methanogenesis from CO(2); methyl-coenzyme M from 5,10-methylene-5,6,7,8-tetrahydromethanopterin: step 2/2. In terms of biological role, part of a complex that catalyzes the formation of methyl-coenzyme M and tetrahydromethanopterin from coenzyme M and methyl-tetrahydromethanopterin. This is an energy-conserving, sodium-ion translocating step. MtrH catalyzes the transfer of the methyl group from methyl-tetrahydromethanopterin to the corrinoid prosthetic group of MtrA. This Methanosarcina acetivorans (strain ATCC 35395 / DSM 2834 / JCM 12185 / C2A) protein is Tetrahydromethanopterin S-methyltransferase subunit H.